The following is a 642-amino-acid chain: Extracellular metalloproteinase 4 (642 aa).

The signal sequence occupies residues 1–18 (MHGLLLAGLLALPLNVLA). A propeptide spanning residues 19–253 (HPTESHSSGI…VHSVVDYVSA (235 aa)) is cleaved from the precursor. Residues 49 to 60 (SDSLTGQDGQSF) show a composition bias toward polar residues. The tract at residues 49 to 72 (SDSLTGQDGQSFTASSADADTSSG) is disordered. Low complexity predominate over residues 61–71 (TASSADADTSS). N-linked (GlcNAc...) asparagine glycosylation occurs at Asn419. His436 contributes to the Zn(2+) binding site. Glu437 is a catalytic residue. His440 lines the Zn(2+) pocket. N-linked (GlcNAc...) asparagine glycosylation is found at Asn509 and Asn602.

The protein belongs to the peptidase M36 family. Zn(2+) serves as cofactor.

The protein localises to the secreted. Functionally, secreted metalloproteinase that allows assimilation of proteinaceous substrates and probably acts as a virulence factor. This Arthroderma gypseum (strain ATCC MYA-4604 / CBS 118893) (Microsporum gypseum) protein is Extracellular metalloproteinase 4 (MEP4).